A 129-amino-acid polypeptide reads, in one-letter code: Large ribosomal subunit protein bL12c (129 aa).

It belongs to the bacterial ribosomal protein bL12 family. In terms of assembly, homodimer. Part of the ribosomal stalk of the 50S ribosomal subunit. Forms a multimeric L10(L12)X complex, where L10 forms an elongated spine to which 2 to 4 L12 dimers bind in a sequential fashion. Binds GTP-bound translation factors.

It localises to the plastid. The protein localises to the chloroplast. Functionally, forms part of the ribosomal stalk which helps the ribosome interact with GTP-bound translation factors. Is thus essential for accurate translation. This chain is Large ribosomal subunit protein bL12c, found in Porphyra purpurea (Red seaweed).